We begin with the raw amino-acid sequence, 189 residues long: Large ribosomal subunit protein bL9 (189 aa).

This sequence belongs to the bacterial ribosomal protein bL9 family.

Functionally, binds to the 23S rRNA. This chain is Large ribosomal subunit protein bL9, found in Methylocella silvestris (strain DSM 15510 / CIP 108128 / LMG 27833 / NCIMB 13906 / BL2).